The chain runs to 308 residues: ADP-L-glycero-D-manno-heptose-6-epimerase (308 aa).

NADP(+) contacts are provided by residues M10–I11, D31–N32, K38, K53, E75–S79, and N92. The active-site Proton acceptor is Y140. Position 144 (K144) interacts with NADP(+). Residue N169 participates in substrate binding. NADP(+) is bound by residues V170 and K178. The active-site Proton acceptor is the K178. Substrate-binding positions include S180, H187, F201–S204, R209, and Y272.

It belongs to the NAD(P)-dependent epimerase/dehydratase family. HldD subfamily. Homopentamer. It depends on NADP(+) as a cofactor.

The enzyme catalyses ADP-D-glycero-beta-D-manno-heptose = ADP-L-glycero-beta-D-manno-heptose. The protein operates within nucleotide-sugar biosynthesis; ADP-L-glycero-beta-D-manno-heptose biosynthesis; ADP-L-glycero-beta-D-manno-heptose from D-glycero-beta-D-manno-heptose 7-phosphate: step 4/4. In terms of biological role, catalyzes the interconversion between ADP-D-glycero-beta-D-manno-heptose and ADP-L-glycero-beta-D-manno-heptose via an epimerization at carbon 6 of the heptose. This Actinobacillus pleuropneumoniae serotype 7 (strain AP76) protein is ADP-L-glycero-D-manno-heptose-6-epimerase.